The sequence spans 286 residues: Pantothenate synthetase (286 aa).

30–37 (MGNLHAGH) contacts ATP. Residue His37 is the Proton donor of the active site. A (R)-pantoate-binding site is contributed by Gln61. Position 61 (Gln61) interacts with beta-alanine. 149-152 (GQKD) lines the ATP pocket. Gln155 contributes to the (R)-pantoate binding site. Residues Val178 and 186 to 189 (LSSR) each bind ATP.

This sequence belongs to the pantothenate synthetase family. In terms of assembly, homodimer.

The protein localises to the cytoplasm. It carries out the reaction (R)-pantoate + beta-alanine + ATP = (R)-pantothenate + AMP + diphosphate + H(+). Its pathway is cofactor biosynthesis; (R)-pantothenate biosynthesis; (R)-pantothenate from (R)-pantoate and beta-alanine: step 1/1. Catalyzes the condensation of pantoate with beta-alanine in an ATP-dependent reaction via a pantoyl-adenylate intermediate. The sequence is that of Pantothenate synthetase from Stutzerimonas stutzeri (strain A1501) (Pseudomonas stutzeri).